Reading from the N-terminus, the 138-residue chain is uncharacterized protein (138 aa).

Transmembrane regions (helical) follow at residues 17–37 (IVVS…TIYF), 43–63 (FTVV…LLVC), and 117–137 (FWWM…LVSL).

Its subcellular location is the cell membrane. This is an uncharacterized protein from Mycoplasma genitalium (strain ATCC 33530 / DSM 19775 / NCTC 10195 / G37) (Mycoplasmoides genitalium).